The following is a 170-amino-acid chain: uncharacterized protein (170 aa).

One can recognise a VOC domain in the interval P25–P151.

This is an uncharacterized protein from Mycobacterium tuberculosis (strain CDC 1551 / Oshkosh).